A 504-amino-acid polypeptide reads, in one-letter code: Maturase K (504 aa).

The protein belongs to the intron maturase 2 family. MatK subfamily.

The protein localises to the plastid. It is found in the chloroplast. Usually encoded in the trnK tRNA gene intron. Probably assists in splicing its own and other chloroplast group II introns. In Cucumis sativus (Cucumber), this protein is Maturase K.